The primary structure comprises 321 residues: Viral T-cell receptor beta chain-like T17T-22 (321 aa).

An N-terminal signal peptide occupies residues 1–28 (MISWLPSVAMGSRLLCCVALCLLGAGPA). Positions 29-122 (DSGLTQTPRH…DSALYLCASS (94 aa)) are v segment. An N-linked (GlcNAc...) asparagine; by host glycan is attached at asparagine 105. The tract at residues 123–128 (PNEDSE) is d segment. The tract at residues 129–144 (YGETLYFGEGSRLTVV) is j segment. Residues 145–321 (EDLKKVSPPK…LMAKVKRKDS (177 aa)) form a c region region. Residues asparagine 214 and asparagine 264 are each glycosylated (N-linked (GlcNAc...) asparagine; by host).

This chain is Viral T-cell receptor beta chain-like T17T-22 (V-TCR), found in Feline leukemia virus.